Reading from the N-terminus, the 229-residue chain is Clathrin light chain B (229 aa).

2 stretches are compositionally biased toward low complexity: residues 1-17 and 45-58; these read MAED…GAPE and GAPA…AQPG. The interval 1–70 is disordered; sequence MAEDFGFFSS…SGAGSEDMST (70 aa). Residues Ser11 and Ser13 each carry the phosphoserine modification. Positions 93–155 are involved in binding clathrin heavy chain; that stretch reads ADRLTQEPES…QVEKNKINNR (63 aa). At Thr187 the chain carries Phosphothreonine. Residues Cys199 and Cys209 are joined by a disulfide bond. The residue at position 204 (Lys204) is an N6-acetyllysine. Ser217 carries the post-translational modification Phosphoserine.

Belongs to the clathrin light chain family. As to quaternary structure, clathrin coats are formed from molecules containing 3 heavy chains and 3 light chains. Interacts (via N-terminus) with HIP1. Interacts with HIP1R.

Its subcellular location is the cytoplasmic vesicle membrane. The protein resides in the membrane. The protein localises to the coated pit. In terms of biological role, clathrin is the major protein of the polyhedral coat of coated pits and vesicles. The polypeptide is Clathrin light chain B (Cltb) (Mus musculus (Mouse)).